Reading from the N-terminus, the 138-residue chain is Large ribosomal subunit protein bL19 (138 aa).

This sequence belongs to the bacterial ribosomal protein bL19 family.

This protein is located at the 30S-50S ribosomal subunit interface and may play a role in the structure and function of the aminoacyl-tRNA binding site. In Rickettsia massiliae (strain Mtu5), this protein is Large ribosomal subunit protein bL19.